Here is a 209-residue protein sequence, read N- to C-terminus: Ribonuclease HII (209 aa).

One can recognise an RNase H type-2 domain in the interval R25 to L209. Residues D31, E32, and D123 each coordinate a divalent metal cation.

Belongs to the RNase HII family. It depends on Mn(2+) as a cofactor. Requires Mg(2+) as cofactor.

The protein resides in the cytoplasm. The enzyme catalyses Endonucleolytic cleavage to 5'-phosphomonoester.. Endonuclease that specifically degrades the RNA of RNA-DNA hybrids. The polypeptide is Ribonuclease HII (Syntrophotalea carbinolica (strain DSM 2380 / NBRC 103641 / GraBd1) (Pelobacter carbinolicus)).